Consider the following 252-residue polypeptide: uncharacterized protein (252 aa).

A signal peptide spans 1 to 20 (MIATLGNLIIPVIFVNYVAS).

This sequence belongs to the ascovirus HvAV ORF17 family.

This is an uncharacterized protein from Spodoptera frugiperda ascovirus 1a (SfAV-1a).